A 185-amino-acid polypeptide reads, in one-letter code: Elongation factor P (185 aa).

The protein belongs to the elongation factor P family.

It localises to the cytoplasm. Its pathway is protein biosynthesis; polypeptide chain elongation. Functionally, involved in peptide bond synthesis. Stimulates efficient translation and peptide-bond synthesis on native or reconstituted 70S ribosomes in vitro. Probably functions indirectly by altering the affinity of the ribosome for aminoacyl-tRNA, thus increasing their reactivity as acceptors for peptidyl transferase. This Alkaliphilus oremlandii (strain OhILAs) (Clostridium oremlandii (strain OhILAs)) protein is Elongation factor P.